The primary structure comprises 144 residues: Large ribosomal subunit protein uL15 (144 aa).

A disordered region spans residues 1 to 54; it reads MKLNTIKPAEGAKHARRRVGRGIGSGLGKTGGRGHKGQKSRAGGFHKVGFEGGQ. The span at 21–31 shows a compositional bias: gly residues; sequence RGIGSGLGKTG.

The protein belongs to the universal ribosomal protein uL15 family. Part of the 50S ribosomal subunit.

Binds to the 23S rRNA. This Methylobacillus flagellatus (strain ATCC 51484 / DSM 6875 / VKM B-1610 / KT) protein is Large ribosomal subunit protein uL15.